The sequence spans 352 residues: Ion-translocating oxidoreductase complex subunit D (352 aa).

4 helical membrane-spanning segments follow: residues 20–40, 42–62, 89–109, and 123–143; these read IMLL…CFFG, GTLV…ALVL, IPPL…VIIA, and PAMI…TSWL. Thr187 is modified (FMN phosphoryl threonine). The next 5 membrane-spanning stretches (helical) occupy residues 215–235, 242–262, 267–287, 301–321, and 322–342; these read LAGA…VWLL, WHIP…GWLF, LAAP…FFIL, LIFG…GGYP, and DGVA…DYYT.

Belongs to the NqrB/RnfD family. As to quaternary structure, the complex is composed of six subunits: RsxA, RsxB, RsxC, RsxD, RsxE and RsxG. Requires FMN as cofactor.

The protein localises to the cell inner membrane. Part of a membrane-bound complex that couples electron transfer with translocation of ions across the membrane. Required to maintain the reduced state of SoxR. The polypeptide is Ion-translocating oxidoreductase complex subunit D (Escherichia coli O7:K1 (strain IAI39 / ExPEC)).